Here is a 260-residue protein sequence, read N- to C-terminus: Coiled-coil domain-containing protein 172 (260 aa).

Residues 13–194 (SEHQAEESRR…FEDKKHEAIC (182 aa)) are a coiled coil.

The protein belongs to the CCDC172 family. May interact with TEKT2.

It is found in the cytoplasm. It localises to the cell projection. Its subcellular location is the cilium. This is Coiled-coil domain-containing protein 172 (CCDC172) from Bos taurus (Bovine).